A 329-amino-acid chain; its full sequence is Ribose-phosphate pyrophosphokinase B (329 aa).

Asp131, His133, and Glu146 together coordinate Mg(2+). Positions 227–242 are binding of phosphoribosylpyrophosphate; the sequence is TGKIAIIIDDIADTCK.

This sequence belongs to the ribose-phosphate pyrophosphokinase family. Mg(2+) is required as a cofactor.

The protein resides in the cytoplasm. It catalyses the reaction D-ribose 5-phosphate + ATP = 5-phospho-alpha-D-ribose 1-diphosphate + AMP + H(+). Its pathway is metabolic intermediate biosynthesis; 5-phospho-alpha-D-ribose 1-diphosphate biosynthesis; 5-phospho-alpha-D-ribose 1-diphosphate from D-ribose 5-phosphate (route I): step 1/1. The chain is Ribose-phosphate pyrophosphokinase B (prsB) from Dictyostelium discoideum (Social amoeba).